Here is a 223-residue protein sequence, read N- to C-terminus: Small ribosomal subunit protein uS3 (223 aa).

Residues 38–106 (IRKFLDEKLK…QVHINIVEIK (69 aa)) enclose the KH type-2 domain.

This sequence belongs to the universal ribosomal protein uS3 family. In terms of assembly, part of the 30S ribosomal subunit. Forms a tight complex with proteins S10 and S14.

Binds the lower part of the 30S subunit head. Binds mRNA in the 70S ribosome, positioning it for translation. This is Small ribosomal subunit protein uS3 from Lactobacillus delbrueckii subsp. bulgaricus (strain ATCC 11842 / DSM 20081 / BCRC 10696 / JCM 1002 / NBRC 13953 / NCIMB 11778 / NCTC 12712 / WDCM 00102 / Lb 14).